A 306-amino-acid chain; its full sequence is Ornithine carbamoyltransferase (306 aa).

Residues serine 53–threonine 56, glutamine 80, arginine 104, and histidine 131–glutamine 134 contribute to the carbamoyl phosphate site. L-ornithine-binding positions include asparagine 162, aspartate 220, and serine 224 to methionine 225. Carbamoyl phosphate-binding positions include cysteine 260 to leucine 261 and arginine 288.

It belongs to the aspartate/ornithine carbamoyltransferase superfamily. OTCase family.

Its subcellular location is the cytoplasm. The catalysed reaction is carbamoyl phosphate + L-ornithine = L-citrulline + phosphate + H(+). It participates in amino-acid biosynthesis; L-arginine biosynthesis; L-arginine from L-ornithine and carbamoyl phosphate: step 1/3. In terms of biological role, reversibly catalyzes the transfer of the carbamoyl group from carbamoyl phosphate (CP) to the N(epsilon) atom of ornithine (ORN) to produce L-citrulline. This chain is Ornithine carbamoyltransferase, found in Dechloromonas aromatica (strain RCB).